The chain runs to 368 residues: Serine/threonine-protein phosphatase PP2A-like PPG1 (368 aa).

Mn(2+) contacts are provided by Asp-50, His-52, Asp-78, and Asn-110. Residue His-111 is the Proton donor of the active site. Mn(2+) is bound by residues His-161 and His-247.

It belongs to the PPP phosphatase family. PP-2A subfamily. Inactivated in a complex with phosphatase methylesterase PPE1 (PP2Ai). Interacts with phosphatase 2A activator RRD1, which can reactivate PP2Ai by dissociating the catalytic subunit from the complex. Interacts with TAP42. Requires Mn(2+) as cofactor. In terms of processing, reversibly methyl esterified on Leu-368 by leucine carboxyl methyltransferase 1 (PPM1) and protein phosphatase methylesterase 1 (PPE1). Carboxyl methylation influences the affinity of the catalytic subunit for the different regulatory subunits, thereby modulating the PP2A holoenzyme's substrate specificity, enzyme activity and cellular localization.

It carries out the reaction O-phospho-L-seryl-[protein] + H2O = L-seryl-[protein] + phosphate. It catalyses the reaction O-phospho-L-threonyl-[protein] + H2O = L-threonyl-[protein] + phosphate. Involved in glycogen accumulation. The polypeptide is Serine/threonine-protein phosphatase PP2A-like PPG1 (PPG1) (Saccharomyces cerevisiae (strain ATCC 204508 / S288c) (Baker's yeast)).